The chain runs to 852 residues: Mannosyl-oligosaccharide glucosidase GCS1 (852 aa).

Residues Met-1–Ser-31 form a disordered region. The Cytoplasmic segment spans residues Met-1 to Lys-51. Positions Arg-6–Arg-12 match the Endoplasmic reticulum targeting motif. Residues Ser-15–Ser-26 are compositionally biased toward low complexity. A helical; Signal-anchor for type II membrane protein transmembrane segment spans residues Ile-52 to Val-72. The Lumenal portion of the chain corresponds to Arg-73–Phe-852. Residues Pro-91–Cys-150 are required for endoplasmic reticulum targeting. N-linked (GlcNAc...) asparagine glycans are attached at residues Asn-282, Asn-552, and Asn-570. Residues Gln-574–Ser-583 are compositionally biased toward polar residues. Residues Gln-574–His-593 form a disordered region. Residue Asp-586 is the Proton donor of the active site. Asn-633, Asn-662, and Asn-730 each carry an N-linked (GlcNAc...) asparagine glycan. Glu-819 acts as the Proton acceptor in catalysis.

Belongs to the glycosyl hydrolase 63 family. Constitutively expressed in roots, stems, leaves, flowers and siliques.

Its subcellular location is the endoplasmic reticulum membrane. It catalyses the reaction N(4)-(alpha-D-Glc-(1-&gt;2)-alpha-D-Glc-(1-&gt;3)-alpha-D-Glc-(1-&gt;3)-alpha-D-Man-(1-&gt;2)-alpha-D-Man-(1-&gt;2)-alpha-D-Man-(1-&gt;3)-[alpha-D-Man-(1-&gt;2)-alpha-D-Man-(1-&gt;3)-[alpha-D-Man-(1-&gt;2)-alpha-D-Man-(1-&gt;6)]-alpha-D-Man-(1-&gt;6)]-beta-D-Man-(1-&gt;4)-beta-D-GlcNAc-(1-&gt;4)-beta-D-GlcNAc)-L-asparaginyl-[protein] + H2O = N(4)-(alpha-D-Glc-(1-&gt;3)-alpha-D-Glc-(1-&gt;3)-alpha-D-Man-(1-&gt;2)-alpha-D-Man-(1-&gt;2)-alpha-D-Man-(1-&gt;3)-[alpha-D-Man-(1-&gt;2)-alpha-D-Man-(1-&gt;3)-[alpha-D-Man-(1-&gt;2)-alpha-D-Man-(1-&gt;6)]-alpha-D-Man-(1-&gt;6)]-beta-D-Man-(1-&gt;4)-beta-D-GlcNAc-(1-&gt;4)-beta-D-GlcNAc)-L-asparaginyl-[protein] + beta-D-glucose. It functions in the pathway glycan metabolism; N-glycan degradation. Functionally, cleaves the distal alpha 1,2-linked glucose residue from the Glc(3)Man(9)GlcNAc(2) oligosaccharide precursor. Required for the accumulation of seed storage proteins, the formation of protein bodies, cell differentiation, cellulose biosynthesis and organization (in cell walls), cell shape determination and organization (e.g. epidermal cells), and embryo development. Involved in root development. This Arabidopsis thaliana (Mouse-ear cress) protein is Mannosyl-oligosaccharide glucosidase GCS1 (GCS1).